The primary structure comprises 145 residues: Deoxyuridine 5'-triphosphate nucleotidohydrolase (145 aa).

Substrate is bound by residues 62–64, Asn75, 79–81, and Lys89; these read RSG and TVD.

The protein belongs to the dUTPase family. It depends on Mg(2+) as a cofactor.

The enzyme catalyses dUTP + H2O = dUMP + diphosphate + H(+). It functions in the pathway pyrimidine metabolism; dUMP biosynthesis; dUMP from dCTP (dUTP route): step 2/2. Functionally, this enzyme is involved in nucleotide metabolism: it produces dUMP, the immediate precursor of thymidine nucleotides and it decreases the intracellular concentration of dUTP so that uracil cannot be incorporated into DNA. This chain is Deoxyuridine 5'-triphosphate nucleotidohydrolase, found in Helicobacter pylori (strain P12).